Reading from the N-terminus, the 751-residue chain is Ribosome biogenesis protein ERB1 (751 aa).

Disordered regions lie at residues 1–140 and 289–336; these read MALT…GNVP and SEPS…DPED. Composition is skewed to acidic residues over residues 34-92 and 119-129; these read LTDE…SDSD and IEPDYDSDSST. The segment covering 294-305 has biased composition (pro residues); the sequence is SQPPPLPAPKRP. The span at 323 to 336 shows a compositional bias: basic and acidic residues; it reads EEEKQEWLKQDPED. WD repeat units follow at residues 410–449, 536–580, 582–621, 622–661, 665–704, and 720–751; these read HPKGRARCVSVSPDGAWAVSGDEDGVVSLWEVNVGCEIRR, PSSG…APFK, IKGAVQQVLFHPIKPHFFVATQQYVRLYNLAEQKLIKTLQ, PGIRWISSMDVHPSGDHVIVGGYDRKLCWFDLELSEKPYK, YHSRAIRSLHFHPTYPLFASSSDDGSIQIFHARVYNDLMT, and TDGLGILQVKWTPKHPWLLSAAADGTVAVWCS.

This sequence belongs to the WD repeat BOP1/ERB1 family. Component of the NOP7 complex, composed of ERB1, NOP7 and YTM1. The complex is held together by ERB1, which interacts with NOP7 via its N-terminal domain and with YTM1 via a high-affinity interaction between the seven-bladed beta-propeller domains of the 2 proteins. The NOP7 complex associates with the 66S pre-ribosome.

The protein localises to the nucleus. It is found in the nucleolus. The protein resides in the nucleoplasm. Its function is as follows. Component of the NOP7 complex, which is required for maturation of the 25S and 5.8S ribosomal RNAs and formation of the 60S ribosome. The chain is Ribosome biogenesis protein ERB1 from Coprinopsis cinerea (strain Okayama-7 / 130 / ATCC MYA-4618 / FGSC 9003) (Inky cap fungus).